The primary structure comprises 1216 residues: MPLSSHLLPALVLFLAGSSGWAWVPNHCRSPGQAVCNFVCDCRDCSDEAQCGYHGASPTLGAPFACDFEQDPCGWRDISTSGYSWLRDRAGAALEGPGPHSDHTLGTDLGWYMAVGTHRGKEASTAALRSPTLREAASSCKLRLWYHAASGDVAELRVELTHGAETLTLWQSTGPWGPGWQELAVTTGRIRGDFRVTFSATRNATHRGAVALDDLEFWDCGLPTPQANCPPGHHHCQNKVCVEPQQLCDGEDNCGDLSDENPLTCGRHIATDFETGLGPWNRSEGWSRNHRAGGPERPSWPRRDHSRNSAQGSFLVSVAEPGTPAILSSPEFQASGTSNCSLVFYQYLSGSEAGCLQLFLQTLGPGAPRAPVLLRRRRGELGTAWVRDRVDIQSAYPFQILLAGQTGPGGVVGLDDLILSDHCRPVSEVSTLQPLPPGPRAPAPQPLPPSSRLQDSCKQGHLACGDLCVPPEQLCDFEEQCAGGEDEQACGTTDFESPEAGGWEDASVGRLQWRRVSAQESQGSSAAAAGHFLSLQRAWGQLGAEARVLTPLLGPSGPSCELHLAYYLQSQPRGFLALVVVDNGSRELAWQALSSSAGIWKVDKVLLGARRRPFRLEFVGLVDLDGPDQQGAGVDNVTLRDCSPTVTTERDREVSCNFERDTCSWYPGHLSDTHWRWVESRGPDHDHTTGQGHFVLLDPTDPLAWGHSAHLLSRPQVPAAPTECLSFWYHLHGPQIGTLRLAMRREGEETHLWSRSGTQGNRWHEAWATLSHQPGSHAQYQLLFEGLRDGYHGTMALDDVAVRPGPCWAPNYCSFEDSDCGFSPGGQGLWRRQANASGHAAWGPPTDHTTETAQGHYMVVDTSPDALPRGQTASLTSKEHRPLAQPACLTFWYHGSLRSPGTLRVYLEERGRHQVLSLSAHGGLAWRLGSMDVQAERAWRVVFEAVAAGVAHSYVALDDLLLQDGPCPQPGSCDFESGLCGWSHLAWPGLGGYSWDWGGGATPSRYPQPPVDHTLGTEAGHFAFFETGVLGPGGRAAWLRSEPLPATPASCLRFWYHMGFPEHFYKGELKVLLHSAQGQLAVWGAGGHRRHQWLEAQVEVASAKEFQIVFEATLGGQPALGPIALDDVEYLAGQHCQQPAPSPGNTAAPGSVPAVVGSALLLLMLLVLLGLGGRRWLQKKGSCPFQSNTEATAPGFDNILFNADGVTLPASVTSDP.

An N-terminal signal peptide occupies residues 1–22 (MPLSSHLLPALVLFLAGSSGWA). Over 23 to 1151 (WVPNHCRSPG…SPGNTAAPGS (1129 aa)) the chain is Extracellular. The LDL-receptor class A 1; truncated domain occupies 26–53 (NHCRSPGQAVCNFVCDCRDCSDEAQCGY). The MAM 1 domain maps to 64 to 222 (FACDFEQDPC…DDLEFWDCGL (159 aa)). Asn-203 is a glycosylation site (N-linked (GlcNAc...) asparagine). In terms of domain architecture, LDL-receptor class A 2 spans 228–266 (NCPPGHHHCQNKVCVEPQQLCDGEDNCGDLSDENPLTCG). 3 disulfides stabilise this stretch: Cys-229–Cys-241, Cys-236–Cys-254, and Cys-248–Cys-265. The 157-residue stretch at 269 to 425 (IATDFETGLG…DLILSDHCRP (157 aa)) folds into the MAM 2 domain. Residues 280–307 (WNRSEGWSRNHRAGGPERPSWPRRDHSR) form a disordered region. N-linked (GlcNAc...) asparagine glycosylation is found at Asn-281 and Asn-339. Positions 429-455 (VSTLQPLPPGPRAPAPQPLPPSSRLQD) are disordered. Over residues 434–449 (PLPPGPRAPAPQPLPP) the composition is skewed to pro residues. In terms of domain architecture, LDL-receptor class A 3 spans 456-491 (SCKQGHLACGDLCVPPEQLCDFEEQCAGGEDEQACG). Disulfide bonds link Cys-457–Cys-468, Cys-464–Cys-481, and Cys-475–Cys-490. 4 MAM domains span residues 491 to 644 (GTTD…DCSP), 654 to 809 (VSCN…PCWA), 811 to 969 (NYCS…PCPQ), and 971 to 1138 (GSCD…HCQQ). Asn-583 and Asn-636 each carry an N-linked (GlcNAc...) asparagine glycan. Residue Asn-835 is glycosylated (N-linked (GlcNAc...) asparagine). The helical transmembrane segment at 1152–1172 (VPAVVGSALLLLMLLVLLGLG) threads the bilayer. Residues 1173-1216 (GRRWLQKKGSCPFQSNTEATAPGFDNILFNADGVTLPASVTSDP) lie on the Cytoplasmic side of the membrane.

The protein resides in the membrane. Its function is as follows. Probably involved in the sorting and selective transport of receptors and ligands across polarized epithelia. The chain is Apical endosomal glycoprotein from Homo sapiens (Human).